A 200-amino-acid polypeptide reads, in one-letter code: Serine/threonine-protein kinase mos (200 aa).

In terms of domain architecture, Protein kinase spans 2 to 200 (LCLLQPLGSG…ELLKGERVTA (199 aa)). ATP-binding positions include 8-16 (LGSGGFGSV) and Lys29. The active-site Proton acceptor is the Asp143.

It belongs to the protein kinase superfamily. Ser/Thr protein kinase family.

It carries out the reaction L-seryl-[protein] + ATP = O-phospho-L-seryl-[protein] + ADP + H(+). It catalyses the reaction L-threonyl-[protein] + ATP = O-phospho-L-threonyl-[protein] + ADP + H(+). In Nycticorax nycticorax (Black-crowned night-heron), this protein is Serine/threonine-protein kinase mos (MOS).